The chain runs to 84 residues: Putative membrane protein insertion efficiency factor (84 aa).

Residues 63 to 84 (WGGSGYDPVPGADPEHDRRPRG) are disordered. Residues 75 to 84 (DPEHDRRPRG) show a composition bias toward basic and acidic residues.

This sequence belongs to the UPF0161 family.

The protein resides in the cell inner membrane. In terms of biological role, could be involved in insertion of integral membrane proteins into the membrane. This is Putative membrane protein insertion efficiency factor from Cereibacter sphaeroides (strain ATCC 17029 / ATH 2.4.9) (Rhodobacter sphaeroides).